We begin with the raw amino-acid sequence, 461 residues long: Pup--protein ligase (461 aa).

Residue Glu9 participates in Mg(2+) binding. Position 53 (Arg53) interacts with ATP. Tyr55 contributes to the Mg(2+) binding site. Asp57 acts as the Proton acceptor in catalysis. Residue Glu63 participates in Mg(2+) binding. Residues Thr66 and Trp420 each contribute to the ATP site.

It belongs to the Pup ligase/Pup deamidase family. Pup-conjugating enzyme subfamily.

It catalyses the reaction ATP + [prokaryotic ubiquitin-like protein]-L-glutamate + [protein]-L-lysine = ADP + phosphate + N(6)-([prokaryotic ubiquitin-like protein]-gamma-L-glutamyl)-[protein]-L-lysine.. Its pathway is protein degradation; proteasomal Pup-dependent pathway. The protein operates within protein modification; protein pupylation. Functionally, catalyzes the covalent attachment of the prokaryotic ubiquitin-like protein modifier Pup to the proteasomal substrate proteins, thereby targeting them for proteasomal degradation. This tagging system is termed pupylation. The ligation reaction involves the side-chain carboxylate of the C-terminal glutamate of Pup and the side-chain amino group of a substrate lysine. The chain is Pup--protein ligase from Renibacterium salmoninarum (strain ATCC 33209 / DSM 20767 / JCM 11484 / NBRC 15589 / NCIMB 2235).